The following is a 433-amino-acid chain: Trigger factor (433 aa).

Residues 163–248 (GDTVNIDFSG…VNEIKFKDVP (86 aa)) enclose the PPIase FKBP-type domain.

It belongs to the FKBP-type PPIase family. Tig subfamily.

The protein resides in the cytoplasm. It catalyses the reaction [protein]-peptidylproline (omega=180) = [protein]-peptidylproline (omega=0). In terms of biological role, involved in protein export. Acts as a chaperone by maintaining the newly synthesized protein in an open conformation. Functions as a peptidyl-prolyl cis-trans isomerase. In Staphylococcus epidermidis (strain ATCC 35984 / DSM 28319 / BCRC 17069 / CCUG 31568 / BM 3577 / RP62A), this protein is Trigger factor.